A 339-amino-acid polypeptide reads, in one-letter code: Fructose-1,6-bisphosphatase class 1 (339 aa).

Positions 91, 113, 115, and 116 each coordinate Mg(2+). Substrate-binding positions include 116 to 119 (DGSS), N208, and K274. E280 lines the Mg(2+) pocket.

Belongs to the FBPase class 1 family. As to quaternary structure, homotetramer. Mg(2+) serves as cofactor.

The protein localises to the cytoplasm. It carries out the reaction beta-D-fructose 1,6-bisphosphate + H2O = beta-D-fructose 6-phosphate + phosphate. It participates in carbohydrate biosynthesis; gluconeogenesis. The chain is Fructose-1,6-bisphosphatase class 1 from Cupriavidus pinatubonensis (strain JMP 134 / LMG 1197) (Cupriavidus necator (strain JMP 134)).